Here is a 179-residue protein sequence, read N- to C-terminus: Large ribosomal subunit protein uL5 (179 aa).

This sequence belongs to the universal ribosomal protein uL5 family. Part of the 50S ribosomal subunit; part of the 5S rRNA/L5/L18/L25 subcomplex. Contacts the 5S rRNA and the P site tRNA. Forms a bridge to the 30S subunit in the 70S ribosome.

Functionally, this is one of the proteins that bind and probably mediate the attachment of the 5S RNA into the large ribosomal subunit, where it forms part of the central protuberance. In the 70S ribosome it contacts protein S13 of the 30S subunit (bridge B1b), connecting the 2 subunits; this bridge is implicated in subunit movement. Contacts the P site tRNA; the 5S rRNA and some of its associated proteins might help stabilize positioning of ribosome-bound tRNAs. The chain is Large ribosomal subunit protein uL5 from Prochlorococcus marinus (strain SARG / CCMP1375 / SS120).